The chain runs to 186 residues: Alkyl hydroperoxide reductase AhpD (186 aa).

Cysteine 132 (proton donor) is an active-site residue. Residues cysteine 132 and cysteine 135 are joined by a disulfide bond. Cysteine 135 (cysteine sulfenic acid (-SOH) intermediate) is an active-site residue.

It belongs to the AhpD family.

The catalysed reaction is N(6)-[(R)-dihydrolipoyl]-L-lysyl-[lipoyl-carrier protein] + a hydroperoxide = N(6)-[(R)-lipoyl]-L-lysyl-[lipoyl-carrier protein] + an alcohol + H2O. Antioxidant protein with alkyl hydroperoxidase activity. Required for the reduction of the AhpC active site cysteine residues and for the regeneration of the AhpC enzyme activity. The protein is Alkyl hydroperoxide reductase AhpD of Anaeromyxobacter dehalogenans (strain 2CP-C).